Consider the following 254-residue polypeptide: Phycobilisome rod-core linker polypeptide CpcG3 (254 aa).

One can recognise a PBS-linker domain in the interval S11–K191.

Belongs to the phycobilisome linker protein family. As to quaternary structure, the phycobilisome is a hemidiscoidal structure that is composed of two distinct substructures: a core complex and a number of rods radiating from the core.

The protein resides in the cellular thylakoid membrane. Rod-core linker protein required for attachment of phycocyanin to allophycocyanin in cores of phycobilisomes. Functionally, linker polypeptides determine the state of aggregation and the location of the disk-shaped phycobiliprotein units within the phycobilisome and modulate their spectroscopic properties in order to mediate a directed and optimal energy transfer. This Mastigocladus laminosus (Fischerella sp.) protein is Phycobilisome rod-core linker polypeptide CpcG3 (cpcG3).